A 143-amino-acid chain; its full sequence is Ponticulin (143 aa).

Residues Met-1–Ala-22 form the signal peptide. Asn-111 carries an N-linked (GlcNAc...) asparagine glycan. A lipid anchor (GPI-like-anchor amidated serine) is attached at Ser-118. Positions Ser-119 to Phe-143 are cleaved as a propeptide — removed in mature form.

Belongs to the ponticulin family. In terms of assembly, monomer. In terms of processing, disulfide bond(s) stabilize the native, actin-binding conformation of ponticulin. Post-translationally, the GPI-like-anchor contains a phosphoceramide group, rather than a phosphatidyl group.

The protein localises to the cell membrane. Binds F-actin and nucleates actin assembly. Major high affinity link between the plasma membrane and the cortical actin network. This chain is Ponticulin (ponA), found in Dictyostelium discoideum (Social amoeba).